Reading from the N-terminus, the 86-residue chain is Large ribosomal subunit protein bL31B (86 aa).

It belongs to the bacterial ribosomal protein bL31 family. Type B subfamily. Part of the 50S ribosomal subunit.

The sequence is that of Large ribosomal subunit protein bL31B from Streptococcus agalactiae serotype III (strain NEM316).